Consider the following 61-residue polypeptide: Large ribosomal subunit protein bL32 (61 aa).

Basic residues predominate over residues M1–R16. The segment at M1–L44 is disordered. Residues V28–L44 are compositionally biased toward basic and acidic residues.

It belongs to the bacterial ribosomal protein bL32 family.

The polypeptide is Large ribosomal subunit protein bL32 (Methylobacterium nodulans (strain LMG 21967 / CNCM I-2342 / ORS 2060)).